Here is a 636-residue protein sequence, read N- to C-terminus: MEGRGPYRIYDPGGSVPSGEASAAFERLVKENSRLKEKMQGIKMLGELLEESQMEATRLRQKAEELVKDNELLPPPSPSLGSFDPLAELTGKDSNVTASPTAPACPSDKPAPVQKPPSSGTSSEFEVVTPEEQNSPESSSHANAMALGPLPREDGNLMLHLQRLETTLSVCAEEPDHGQLFTHLGRMALEFNRLASKVHKNEQRTSILQTLCEQLRKENEALKAKLDKGLEQRDQAAERLREENLELKKLLMSNGNKEGASGRPGSPKMEGTGKKAVAGQQQASVTAGKVPEVVALGAAEKKVKMLEQQRSELLEVNKQWDQHFRSMKQQYEQKITELRQKLADLQKQVTDLEAEREQKQRDFDRKLLLAKSKIEMEETDKEQLTAEAKELRQKVKYLQDQLSPLTRQREYQEKEIQRLNKALEEALSIQTPPSSPPTAFGSPEGAGALLRKQELVTQNELLKQQVKIFEEDFQRERSDRERMNEEKEELKKQVEKLQAQVTLSNAQLKAFKDEEKAREALRQQKRKAKASGERYHVEPHPEHLCGAYPYAYPPMPAMVPHHGFEDWSQIRYPPPPMAMEHPPPLPNSRLFHLPEYTWRLPCGGVRNPNQSSQVMDPPTARPTEPESPKNDREGPQ.

The stretch at 20 to 73 forms a coiled coil; it reads EASAAFERLVKENSRLKEKMQGIKMLGELLEESQMEATRLRQKAEELVKDNELL. A compositionally biased stretch (basic and acidic residues) spans 61 to 71; the sequence is QKAEELVKDNE. Disordered stretches follow at residues 61–151 and 252–283; these read QKAE…GPLP and MSNGNKEGASGRPGSPKMEGTGKKAVAGQQQA. Position 77 is a phosphoserine (serine 77). Residues 94–412 form an interaction with Nef region; that stretch reads SNVTASPTAP…SPLTRQREYQ (319 aa). The segment covering 131–142 has biased composition (polar residues); the sequence is EEQNSPESSSHA. Positions 196–258 form a coiled coil; it reads SKVHKNEQRT…KLLMSNGNKE (63 aa). Position 284 is a phosphoserine (serine 284). Residues 294-535 are a coiled coil; it reads VALGAAEKKV…RKAKASGERY (242 aa). The segment at 351-367 is interaction with Shigella flexneri ipah9.8; it reads DLEAEREQKQRDFDRKL. The residue at position 403 (serine 403) is a Phosphoserine. Residues 431-588 are required for inhibitory activity of TNF-induced NF-kappa-B activation; the sequence is TPPSSPPTAF…MEHPPPLPNS (158 aa). A Phosphothreonine modification is found at threonine 438. Serine 442 is subject to Phosphoserine. The interval 452–510 is ubiquitin-binding domain (UBD); it reads KQELVTQNELLKQQVKIFEEDFQRERSDRERMNEEKEELKKQVEKLQAQVTLSNAQLKA. A Nuclear localization signal motif is present at residues 524–530; the sequence is QKRKAKA. Phosphotyrosine is present on tyrosine 552. Arginine 571 carries the post-translational modification Asymmetric dimethylarginine. The residue at position 599 (arginine 599) is an Asymmetric dimethylarginine; alternate. Arginine 599 bears the Omega-N-methylarginine; alternate mark. The tract at residues 603 to 636 is disordered; the sequence is GGVRNPNQSSQVMDPPTARPTEPESPKNDREGPQ. Over residues 623–636 the composition is skewed to basic and acidic residues; the sequence is TEPESPKNDREGPQ. Serine 627 bears the Phosphoserine mark.

Interacts with TNFAIP3 and IKBKG (polyubiquitinated); facilitates TNFAIP3-mediated de-ubiquitination of NEMO/IKBKG. Interacts with polyubiquitin. Interacts with MAPK1, SELPLG and PIK3CD. Interacts with IRAK1 (polyubiquitinated). Interacts with MYD88; the interaction is indicative for participation in an activated TLR-signaling complex. Interacts with HIV-1 matrix protein. Interacts with TAX1BP1. As to quaternary structure, (Microbial infection) Interacts with Shigella flexneri ipah9.8; the interaction promotes polyubiquitination of IKBKG. Post-translationally, phosphorylation at Tyr-552 by SRC-family kinases recruits phosphoinositide-3-kinase (PI3K) PIK3CD:p85 heterodimer which results in integrin activation and leukocyte adhesion to activated endothelium during inflammation. As to expression, ubiquitous. Strongly expressed in peripheral blood lymphocytes, spleen and skeletal muscle, and is weakly expressed in the brain. In peripheral blood mononucleocytes, isoform 4 is mainly expressed and isoform 1 and isoform 7 are almost not expressed. Expression of isoform 1 and isoform 7 increases in leukemic cells.

The protein resides in the cytoplasm. The protein localises to the nucleus. Functionally, inhibits NF-kappa-B activation and TNF-induced NF-kappa-B-dependent gene expression by regulating TAX1BP1 and A20/TNFAIP3-mediated deubiquitination of IKBKG; proposed to link A20/TNFAIP3 to ubiquitinated IKBKG. Involved in regulation of EGF-induced ERK1/ERK2 signaling pathway; blocks MAPK3/MAPK1 nuclear translocation and MAPK1-dependent transcription. Increases cell surface CD4(T4) antigen expression. Involved in the anti-inflammatory response of macrophages and positively regulates TLR-induced activation of CEBPB. Involved in the prevention of autoimmunity; this function implicates binding to polyubiquitin. Involved in leukocyte integrin activation during inflammation; this function is mediated by association with SELPLG and dependent on phosphorylation by SRC-family kinases. Interacts with HIV-1 matrix protein and is packaged into virions and overexpression can inhibit viral replication. May regulate matrix nuclear localization, both nuclear import of PIC (Preintegration complex) and export of GAG polyprotein and viral genomic RNA during virion production. In case of infection, promotes association of IKBKG with Shigella flexneri E3 ubiquitin-protein ligase ipah9.8 p which in turn promotes polyubiquitination of IKBKG leading to its proteasome-dependent degradation and thus is perturbing NF-kappa-B activation during bacterial infection. In Homo sapiens (Human), this protein is TNFAIP3-interacting protein 1 (TNIP1).